Consider the following 893-residue polypeptide: DNA mismatch repair protein MutS (893 aa).

ATP is bound at residue 631–638 (GPNMAGKS). A disordered region spans residues 821-858 (AGRPRVAVRQPQGGRRGASTGQLGLFGMEPAQGGTGVT).

The protein belongs to the DNA mismatch repair MutS family.

Functionally, this protein is involved in the repair of mismatches in DNA. It is possible that it carries out the mismatch recognition step. This protein has a weak ATPase activity. The chain is DNA mismatch repair protein MutS from Myxococcus xanthus (strain DK1622).